A 94-amino-acid chain; its full sequence is Co-chaperonin GroES (94 aa).

It belongs to the GroES chaperonin family. In terms of assembly, heptamer of 7 subunits arranged in a ring. Interacts with the chaperonin GroEL.

Its subcellular location is the cytoplasm. Together with the chaperonin GroEL, plays an essential role in assisting protein folding. The GroEL-GroES system forms a nano-cage that allows encapsulation of the non-native substrate proteins and provides a physical environment optimized to promote and accelerate protein folding. GroES binds to the apical surface of the GroEL ring, thereby capping the opening of the GroEL channel. The chain is Co-chaperonin GroES from Lactobacillus helveticus (strain DPC 4571).